A 186-amino-acid polypeptide reads, in one-letter code: Peptide deformylase (186 aa).

Residues cysteine 113 and histidine 156 each contribute to the Fe cation site. Residue glutamate 157 is part of the active site. Histidine 160 contributes to the Fe cation binding site.

This sequence belongs to the polypeptide deformylase family. It depends on Fe(2+) as a cofactor.

The enzyme catalyses N-terminal N-formyl-L-methionyl-[peptide] + H2O = N-terminal L-methionyl-[peptide] + formate. Its function is as follows. Removes the formyl group from the N-terminal Met of newly synthesized proteins. Requires at least a dipeptide for an efficient rate of reaction. N-terminal L-methionine is a prerequisite for activity but the enzyme has broad specificity at other positions. The chain is Peptide deformylase from Ligilactobacillus salivarius (strain UCC118) (Lactobacillus salivarius).